A 492-amino-acid chain; its full sequence is Acyl-CoA-binding domain-containing protein 5 (492 aa).

The ACB domain maps to 8 to 97 (HATRFEAAVK…MKKILESMPM (90 aa)). An acyl-CoA-binding positions include 19–28 (IQSLPKNGSF), 39–43 (YSFYK), Lys65, and Tyr84. Disordered stretches follow at residues 141–162 (AVNGKAESSDSGAESEEEGLRE) and 335–399 (VKCG…DRGP). A compositionally biased stretch (acidic residues) spans 153–162 (AESEEEGLRE). The segment covering 335–360 (VKCGGEDGKASNGAPHKEKKDGEKAD) has biased composition (basic and acidic residues). Residues 378–388 (GSQGGQMGNGG) are compositionally biased toward gly residues. Positions 389 to 399 (DGERWGSDRGP) are enriched in basic and acidic residues. The stretch at 405 to 431 (EQIAVVLMRLQEDMQNVLQRLHMLEAV) forms a coiled coil. A helical transmembrane segment spans residues 464–484 (GVLAFAIVWPFIAQWLVHVYL).

Belongs to the ATG37 family.

It is found in the peroxisome membrane. In terms of biological role, acyl-CoA binding protein which acts as the peroxisome receptor for pexophagy but is dispensable for aggrephagy and nonselective autophagy. Binds medium- and long-chain acyl-CoA esters. The chain is Acyl-CoA-binding domain-containing protein 5 (ACBD5) from Gallus gallus (Chicken).